The following is a 627-amino-acid chain: Carene synthase 3, chloroplastic (627 aa).

The transit peptide at 1–36 (MSVISIVPLASKSCLYKSLMSSTHELKALCRPIATL) directs the protein to the chloroplast. Mg(2+)-binding residues include aspartate 378, aspartate 382, and aspartate 530. The DDXXD motif motif lies at 378–382 (DDMYD).

The protein belongs to the terpene synthase family. Tpsd subfamily. Requires Mg(2+) as cofactor. Mn(2+) is required as a cofactor.

It is found in the plastid. The protein resides in the chloroplast. It catalyses the reaction (2E)-geranyl diphosphate = (+)-car-3-ene + diphosphate. The protein operates within terpene metabolism; oleoresin biosynthesis. Its function is as follows. Terpene synthase (TPS) involved in defensive oleoresin formation in conifers in response to insect attack or other injury. The protein is Carene synthase 3, chloroplastic (TPS-3car3) of Picea sitchensis (Sitka spruce).